The chain runs to 164 residues: UPF0478 protein SSP1024 (164 aa).

A helical membrane pass occupies residues 7–27 (IAGIIAAVAFLILVIGIVVVL). Residues 136–164 (RNRRDSANYKTSSVANETNHSYTTRVDNK) form a disordered region. Over residues 143 to 164 (NYKTSSVANETNHSYTTRVDNK) the composition is skewed to polar residues.

This sequence belongs to the UPF0478 family.

The protein resides in the cell membrane. The sequence is that of UPF0478 protein SSP1024 from Staphylococcus saprophyticus subsp. saprophyticus (strain ATCC 15305 / DSM 20229 / NCIMB 8711 / NCTC 7292 / S-41).